The following is a 349-amino-acid chain: Isopentenyl-diphosphate delta-isomerase (349 aa).

Substrate is bound at residue 12-13; that stretch reads RK. Residues 69 to 71, S99, and N128 each bind FMN; that span reads GMT. Residue Q158 coordinates substrate. Mg(2+) is bound at residue E159. Residues K189, S214, T219, 265–267, and 286–287 contribute to the FMN site; these read GIR and SG.

It belongs to the IPP isomerase type 2 family. As to quaternary structure, homooctamer. Dimer of tetramers. Requires FMN as cofactor. The cofactor is NADPH. Mg(2+) is required as a cofactor.

The protein localises to the cytoplasm. It catalyses the reaction isopentenyl diphosphate = dimethylallyl diphosphate. In terms of biological role, involved in the biosynthesis of isoprenoids. Catalyzes the 1,3-allylic rearrangement of the homoallylic substrate isopentenyl (IPP) to its allylic isomer, dimethylallyl diphosphate (DMAPP). This chain is Isopentenyl-diphosphate delta-isomerase, found in Latilactobacillus sakei subsp. sakei (strain 23K) (Lactobacillus sakei subsp. sakei).